The following is a 203-amino-acid chain: Mitotic spindle assembly checkpoint protein MAD2A (203 aa).

The HORMA domain maps to 14–196 (KGSTEIVTEF…TTIHKVESMV (183 aa)). The segment at 194-203 (SMVAYKISND) is required for assuming the closed conformation and for interaction with cdc20.

It belongs to the MAD2 family. In terms of assembly, interacts with cdc20.

The protein localises to the nucleus. The protein resides in the chromosome. Its subcellular location is the centromere. It is found in the kinetochore. It localises to the cytoplasm. Component of the spindle-assembly checkpoint that prevents the onset of anaphase until all chromosomes are properly aligned at the metaphase plate. Required for the execution of the mitotic checkpoint which monitors the process of kinetochore-spindle attachment and inhibits the activity of the anaphase promoting complex until all chromosomes are aligned at the metaphase plate. This is Mitotic spindle assembly checkpoint protein MAD2A (mad2l1-1) from Dictyostelium discoideum (Social amoeba).